A 249-amino-acid polypeptide reads, in one-letter code: Probable WRKY transcription factor 64 (249 aa).

The segment at residues 97 to 165 (SPTPRPDDGF…YLGKHVCKAV (69 aa)) is a DNA-binding region (WRKY).

Belongs to the WRKY group III family.

It is found in the nucleus. In terms of biological role, transcription factor. Interacts specifically with the W box (5'-(T)TGAC[CT]-3'), a frequently occurring elicitor-responsive cis-acting element. This chain is Probable WRKY transcription factor 64 (WRKY64), found in Arabidopsis thaliana (Mouse-ear cress).